A 320-amino-acid polypeptide reads, in one-letter code: Eukaryotic translation initiation factor 3 subunit G (320 aa).

The disordered stretch occupies residues 1-25 (MPTGDFDSKPSWADQVEEEGEDDKC). 2 positions are modified to phosphoserine: S8 and S11. Phosphothreonine occurs at positions 38 and 41. A phosphoserine mark is found at S42, S189, S223, and S264. The tract at residues 209–234 (KTGKYVPPSLRDGASRRGESMQPNRR) is disordered. The span at 221–234 (GASRRGESMQPNRR) shows a compositional bias: basic and acidic residues. Residues 239–317 (ATIRVTNLSE…LILNVEWAKP (79 aa)) enclose the RRM domain.

It belongs to the eIF-3 subunit G family. Component of the eukaryotic translation initiation factor 3 (eIF-3) complex, which is composed of 13 subunits: EIF3A, EIF3B, EIF3C, EIF3D, EIF3E, EIF3F, EIF3G, EIF3H, EIF3I, EIF3J, EIF3K, EIF3L and EIF3M. The eIF-3 complex appears to include 3 stable modules: module A is composed of EIF3A, EIF3B, EIF3G and EIF3I; module B is composed of EIF3F, EIF3H, and EIF3M; and module C is composed of EIF3C, EIF3D, EIF3E, EIF3K and EIF3L. EIF3C of module C binds EIF3B of module A and EIF3H of module B, thereby linking the three modules. EIF3J is a labile subunit that binds to the eIF-3 complex via EIF3B. The eIF-3 complex interacts with RPS6KB1 under conditions of nutrient depletion. Mitogenic stimulation leads to binding and activation of a complex composed of FRAP1 and RAPTOR, leading to phosphorylation and release of RPS6KB1 and binding of EIF4B to eIF-3. Interacts (via C-terminus) with AIFM1 (via N-terminus). Interacts with DHX33; the interaction is independent of RNA. Phosphorylated. Phosphorylation is enhanced upon serum stimulation.

It is found in the cytoplasm. The protein resides in the nucleus. It localises to the perinuclear region. RNA-binding component of the eukaryotic translation initiation factor 3 (eIF-3) complex, which is required for several steps in the initiation of protein synthesis. The eIF-3 complex associates with the 40S ribosome and facilitates the recruitment of eIF-1, eIF-1A, eIF-2:GTP:methionyl-tRNAi and eIF-5 to form the 43S pre-initiation complex (43S PIC). The eIF-3 complex stimulates mRNA recruitment to the 43S PIC and scanning of the mRNA for AUG recognition. The eIF-3 complex is also required for disassembly and recycling of post-termination ribosomal complexes and subsequently prevents premature joining of the 40S and 60S ribosomal subunits prior to initiation. The eIF-3 complex specifically targets and initiates translation of a subset of mRNAs involved in cell proliferation, including cell cycling, differentiation and apoptosis, and uses different modes of RNA stem-loop binding to exert either translational activation or repression. This subunit can bind 18S rRNA. The chain is Eukaryotic translation initiation factor 3 subunit G from Bos taurus (Bovine).